Consider the following 1810-residue polypeptide: Trinucleotide repeat-containing gene 6B protein (1810 aa).

Over residues 1–22 (MQTNEGEVEEESSSQVEQEDFV) the composition is skewed to acidic residues. 4 disordered regions span residues 1–221 (MQTN…PNPI), 235–1080 (EEWP…KKQM), 1141–1196 (MRKD…SSPG), and 1293–1329 (ALQQ…NMVP). Residues 33-75 (GEESKQEKEQEREEQLMEDKKRKKEDKKKKEATQKVTEQKTKV) are a coiled coil. Basic and acidic residues-rich tracts occupy residues 34 to 52 (EESK…MEDK) and 60 to 77 (KKKE…KVPE). Residues 37-1028 (KQEKEQEREE…AMKPNSKSMQ (992 aa)) are interaction with argonaute proteins. Residues 88 to 106 (AASPIGSSPSPPVNGGNNA) show a composition bias toward low complexity. Positions 123 to 139 (MPREVPPRFRCQQDHKV) are enriched in basic and acidic residues. Positions 165–174 (APGANPNNNA) are enriched in low complexity. Residues 180-190 (LLQSESGTAPE) show a composition bias toward polar residues. 2 stretches are compositionally biased toward low complexity: residues 207–220 (GPGA…SPNP) and 248–260 (SSEN…SASN). Polar residues-rich tracts occupy residues 261-290 (PGSE…SGNE) and 306-327 (QPPN…TSGQ). Low complexity-rich tracts occupy residues 335–346 (GFSNFNPNSNPS), 363–380 (ETES…GQAS), and 416–425 (NSLNLSSPNP). The span at 438–451 (GNTSRSTDAPSQST) shows a compositional bias: polar residues. A compositionally biased stretch (low complexity) spans 475–486 (SGQSNSGNNGNN). Polar residues-rich tracts occupy residues 504–528 (GSKS…PQDN), 564–575 (GPNQPNSSTGAW), 611–623 (TGSN…SDSH), and 655–667 (LSNT…QIKQ). Residues 675-688 (EVPRPEGKSDKGTE) are compositionally biased toward basic and acidic residues. 2 stretches are compositionally biased toward polar residues: residues 774 to 783 (QPNQGWTSGK) and 793 to 804 (VKNNNWESSANK). The span at 809 to 824 (WGEGGQNEIGTWGNGG) shows a compositional bias: gly residues. Residues 846-857 (TGRQPNSWNKQH) show a composition bias toward polar residues. Ser913 carries the phosphoserine modification. Composition is skewed to polar residues over residues 934–950 (NSYN…NSQG), 964–975 (TGKSASVWSKST), 1004–1027 (ASTT…SKSM), 1057–1072 (TAGS…SASW), and 1175–1195 (GNST…SSSP). A silencing domain; interaction with CNOT1 and PAN3 region spans residues 1191–1700 (LSSSPGLRAQ…LAEFATEDEV (510 aa)). Over residues 1295-1307 (QQQQQQQQQQQRQ) the composition is skewed to low complexity. Ser1409 carries the phosphoserine modification. Thr1426 carries the post-translational modification Phosphothreonine. Ser1438 bears the Phosphoserine mark. Position 1441 is a phosphothreonine (Thr1441). The tract at residues 1449 to 1467 (SNASWPPEFQPGVPWKGIQ) is PABPC1-interacting motif-2 (PAM2). The tract at residues 1568–1619 (SSRNTTPLTRPPPGLTNPKPASPWSSTAPRSVRGWGTQDSRIASASTWSDGG) is disordered. Over residues 1604-1617 (TQDSRIASASTWSD) the composition is skewed to polar residues. In terms of domain architecture, RRM spans 1625–1697 (YWLVLHNLTP…TTILAEFATE (73 aa)). 2 disordered regions span residues 1706 to 1740 (QAQP…GPAL) and 1786 to 1810 (EDPH…SDSI). Residues 1722 to 1733 (GWQSLETSQNQA) are compositionally biased toward polar residues. The span at 1792-1801 (GSPAPLLPGD) shows a compositional bias: low complexity. A phosphoserine mark is found at Ser1793 and Ser1809.

Belongs to the GW182 family. Interacts with AGO1, AGO2, AGO3 and AGO4. Interacts with CNOT1; the interaction mediates the association with the CCR4-NOT complex. Interacts with PAN3; the interaction mediates the association with the PAN complex. Interacts with MOV10; the interaction is direct and RNA-dependent.

It is found in the cytoplasm. The protein localises to the P-body. Plays a role in RNA-mediated gene silencing by both micro-RNAs (miRNAs) and short interfering RNAs (siRNAs). Required for miRNA-dependent translational repression and siRNA-dependent endonucleolytic cleavage of complementary mRNAs by argonaute family proteins. As scaffolding protein associates with argonaute proteins bound to partially complementary mRNAs and simultaneously can recruit CCR4-NOT and PAN deadenylase complexes. This is Trinucleotide repeat-containing gene 6B protein (Tnrc6b) from Mus musculus (Mouse).